A 295-amino-acid polypeptide reads, in one-letter code: MKHMTPGLTEKKLYVYYDERYPYSWIPHNVAKHISKELEKYDFEVIDAPSLQRVLGEGSKDTNKEYVVVFAQDVVPDLVLDNPDNPTSNSLLRRFLNAGQIIVWMGDSPQYVGRADDNQKLNPPVMQNVLSMNPNYITTNKRISLTISGIVLSLPLWVGTKPHNKTPPHGVSGVSINPLAVAIDNVQYAHAFIISYKQSASGFVRIYDFPINKEELVTKQFIRGILGVATRDVTTPIWNKIEILSEEVNKIDEKFDTKFNTLKSEIDTFKTTINEILKLEKEILEVIQKKCENKE.

This is an uncharacterized protein from Methanocaldococcus jannaschii (strain ATCC 43067 / DSM 2661 / JAL-1 / JCM 10045 / NBRC 100440) (Methanococcus jannaschii).